Consider the following 692-residue polypeptide: Aspartate--tRNA ligase, mitochondrial (692 aa).

The transit peptide at Met-1–Asn-61 directs the protein to the mitochondrion. Glu-264 lines the L-aspartate pocket. Residues Gln-287–Lys-290 are aspartate. Residue Arg-309 participates in L-aspartate binding. ATP is bound by residues Arg-309–Glu-311 and Glu-590. Arg-597 contributes to the L-aspartate binding site. Position 642 to 645 (Gly-642 to Arg-645) interacts with ATP.

This sequence belongs to the class-II aminoacyl-tRNA synthetase family. Type 1 subfamily.

It localises to the mitochondrion matrix. The enzyme catalyses tRNA(Asp) + L-aspartate + ATP = L-aspartyl-tRNA(Asp) + AMP + diphosphate. The chain is Aspartate--tRNA ligase, mitochondrial (maspS) from Dictyostelium discoideum (Social amoeba).